The sequence spans 325 residues: Tagatose 1,6-diphosphate aldolase 1 (325 aa).

This sequence belongs to the aldolase LacD family.

The catalysed reaction is D-tagatofuranose 1,6-bisphosphate = D-glyceraldehyde 3-phosphate + dihydroxyacetone phosphate. The protein operates within carbohydrate metabolism; D-tagatose 6-phosphate degradation; D-glyceraldehyde 3-phosphate and glycerone phosphate from D-tagatose 6-phosphate: step 2/2. The protein is Tagatose 1,6-diphosphate aldolase 1 (lacD1) of Enterococcus faecalis (strain ATCC 700802 / V583).